The chain runs to 198 residues: Peptidyl-tRNA hydrolase (198 aa).

Tyr15 serves as a coordination point for tRNA. Catalysis depends on His20, which acts as the Proton acceptor. Residues Phe66, Asn68, and Asn114 each coordinate tRNA.

It belongs to the PTH family. As to quaternary structure, monomer.

The protein localises to the cytoplasm. The enzyme catalyses an N-acyl-L-alpha-aminoacyl-tRNA + H2O = an N-acyl-L-amino acid + a tRNA + H(+). Functionally, hydrolyzes ribosome-free peptidyl-tRNAs (with 1 or more amino acids incorporated), which drop off the ribosome during protein synthesis, or as a result of ribosome stalling. Catalyzes the release of premature peptidyl moieties from peptidyl-tRNA molecules trapped in stalled 50S ribosomal subunits, and thus maintains levels of free tRNAs and 50S ribosomes. The chain is Peptidyl-tRNA hydrolase from Cupriavidus metallidurans (strain ATCC 43123 / DSM 2839 / NBRC 102507 / CH34) (Ralstonia metallidurans).